The primary structure comprises 76 residues: MRTFALLTAMLLLVALHAQAEARQARADEAAAQQQPGTDDQGMAHSFTWPENAALPLSESAKGLRCICTRGFCRLL.

Residues 1-22 (MRTFALLTAMLLLVALHAQAEA) form the signal peptide. The propeptide occupies 23-64 (RQARADEAAAQQQPGTDDQGMAHSFTWPENAALPLSESAKGL). Residues 25 to 45 (ARADEAAAQQQPGTDDQGMAH) form a disordered region. A Cyclopeptide (Arg-Cys) (interchain with C-73 in subunit A); in form RTD-3 cross-link involves residue Arg-65. Residue Arg-65 forms a Cyclopeptide (Arg-Cys) (interchain with C-73 in subunit B); in form RTD-1 linkage. A disulfide bridge connects residues Cys-68 and Cys-73. Residue Cys-73 forms a Cyclopeptide (Cys-Arg) (interchain with R-65 in subunit A); in form RTD-3 linkage. A Cyclopeptide (Cys-Arg) (interchain with R-65 in subunit B); in form RTD-1 cross-link involves residue Cys-73. Positions 74 to 76 (RLL) are excised as a propeptide.

Belongs to the alpha-defensin family. Theta subfamily. In terms of assembly, RTD-1 is a cyclic heterodimer composed of subunits A and B; disulfide-linked. RTD-3 is a cyclic homodimer composed of two subunits A; disulfide-linked. In terms of processing, forms a cyclic peptide with subunit A (RTD-3) or with subunit B (RTD-1). An additional intersubunit disulfide bond is formed. In terms of tissue distribution, RTD-1 is expressed in bone marrow. Detected in promyelocytes, myelocytes and mature neutrophils and monocytes.

RTD-1 and RTD-3 have similar antimicrobial activities against the Gram-positive bacteria S.aureus 502A and L.monocytogenes, the Gram-negative bacteria S.typhimurium and E.coli ML35, and the fungi C.albicans 16820 and C.neoformans 271A. The chain is Rhesus theta defensin-1/3 subunit A (RTD1A) from Macaca mulatta (Rhesus macaque).